We begin with the raw amino-acid sequence, 395 residues long: L-rhamnonate dehydratase (395 aa).

Residues His-23 and Arg-49 each contribute to the substrate site. Mg(2+) contacts are provided by Asp-215, Glu-241, and Glu-269. His-319 functions as the Proton acceptor in the catalytic mechanism. Glu-339 contributes to the substrate binding site.

This sequence belongs to the mandelate racemase/muconate lactonizing enzyme family. RhamD subfamily. Homooctamer; tetramer of dimers. It depends on Mg(2+) as a cofactor.

It catalyses the reaction L-rhamnonate = 2-dehydro-3-deoxy-L-rhamnonate + H2O. Its function is as follows. Catalyzes the dehydration of L-rhamnonate to 2-keto-3-deoxy-L-rhamnonate (KDR). In Delftia acidovorans (strain DSM 14801 / SPH-1), this protein is L-rhamnonate dehydratase.